A 218-amino-acid chain; its full sequence is MSLLGRIAEKTSRLSCLRLMSVYPTHYVEPIVQKYKQLEQKNDLSKLYHVPIKAAVNKSSDTIFHDDTKHKMINYITKKGNSALARTLLSKTLELIKRTQTEHMNLAKGEKTTINTNPETLLKQAVENCRPLLQVTAIKRGGVTYQVPVPITTKRSYFLAMKWLLEAAREKERKVSLPEKLAWEILDAAHGQGRVIKRKDDLHRLCESNRAYAHYRWS.

A mitochondrion-targeting transit peptide spans 1–19; it reads MSLLGRIAEKTSRLSCLRL.

It belongs to the universal ribosomal protein uS7 family. As to quaternary structure, component of the mitochondrial ribosome small subunit (28S) which comprises a 12S rRNA and about 30 distinct proteins.

Its subcellular location is the mitochondrion. The polypeptide is Small ribosomal subunit protein uS7m (mRpS7) (Drosophila melanogaster (Fruit fly)).